A 161-amino-acid polypeptide reads, in one-letter code: Phosphopantetheine adenylyltransferase (161 aa).

Threonine 9 is a binding site for substrate. ATP contacts are provided by residues 9 to 10 (TF) and histidine 17. Residues lysine 41, leucine 73, and arginine 87 each coordinate substrate. Residues 88 to 90 (GLR), glutamate 98, and 123 to 129 (YQFISGT) each bind ATP.

Belongs to the bacterial CoaD family. Homohexamer. Mg(2+) serves as cofactor.

The protein localises to the cytoplasm. The enzyme catalyses (R)-4'-phosphopantetheine + ATP + H(+) = 3'-dephospho-CoA + diphosphate. It participates in cofactor biosynthesis; coenzyme A biosynthesis; CoA from (R)-pantothenate: step 4/5. Functionally, reversibly transfers an adenylyl group from ATP to 4'-phosphopantetheine, yielding dephospho-CoA (dPCoA) and pyrophosphate. The chain is Phosphopantetheine adenylyltransferase from Cupriavidus metallidurans (strain ATCC 43123 / DSM 2839 / NBRC 102507 / CH34) (Ralstonia metallidurans).